A 204-amino-acid polypeptide reads, in one-letter code: dTTP/UTP pyrophosphatase (204 aa).

The active-site Proton acceptor is the Asp-76.

The protein belongs to the Maf family. YhdE subfamily. Requires a divalent metal cation as cofactor.

Its subcellular location is the cytoplasm. The enzyme catalyses dTTP + H2O = dTMP + diphosphate + H(+). It carries out the reaction UTP + H2O = UMP + diphosphate + H(+). Nucleoside triphosphate pyrophosphatase that hydrolyzes dTTP and UTP. May have a dual role in cell division arrest and in preventing the incorporation of modified nucleotides into cellular nucleic acids. This Salinibacter ruber (strain DSM 13855 / M31) protein is dTTP/UTP pyrophosphatase.